The primary structure comprises 478 residues: MLYEKFEYNINNLIGNFGLSKISIAVSGGSDSVALLYLANIWAEKNNIELFVISVDHNLREQSKQETHYIQNISNSLNRKHYSLSFDHQNNFSNLQERAREGRYDLMTNLCLELDILVLLTAHHEDDYVENFCLRLERNSGIFGLSSSNINWYNNIQIIRPLYNIPKSELVEYLVRHNIKWFEDESNSSDKYRRNVIRQKLAKGADYIRHFSKPVYREEFKGDTERSTAAYTLVREDASTGTASKLSLEAKCGKMSKAAIISQQLKTNKLIENEFKPELISAIAEAVKIFEYGFAFLDLVKFDKFSNEVKVQIINFLLIIISGQSRAARFYSVEPILKLITQDVNFKNTLHGCIIKRIQNELLIYREFGKKLPESKILLDKSVIWDNRFCITKNQETPNCFVTHLSLKDYKIIKKQLDLEPLKNLSCKNHNAVLLTLPIIKILEKVIAIPHISYYDNDMWNFEVSFSPNFVSRFTHFC.

27 to 32 (SGGSDS) lines the ATP pocket.

It belongs to the tRNA(Ile)-lysidine synthase family.

The protein localises to the cytoplasm. It catalyses the reaction cytidine(34) in tRNA(Ile2) + L-lysine + ATP = lysidine(34) in tRNA(Ile2) + AMP + diphosphate + H(+). Ligates lysine onto the cytidine present at position 34 of the AUA codon-specific tRNA(Ile) that contains the anticodon CAU, in an ATP-dependent manner. Cytidine is converted to lysidine, thus changing the amino acid specificity of the tRNA from methionine to isoleucine. The protein is tRNA(Ile)-lysidine synthase of Rickettsia conorii (strain ATCC VR-613 / Malish 7).